The chain runs to 721 residues: Teichoic acid poly(glycerol phosphate) polymerase (721 aa).

CDP-glycerol is bound by residues 443-447 (WHGTP), arginine 511, 545-546 (PT), 582-584 (RMH), 624-625 (SS), and aspartate 629.

The protein belongs to the CDP-glycerol glycerophosphotransferase family.

The protein localises to the cell membrane. The enzyme catalyses 4-O-[(2R)-glycerylphospho]-N-acetyl-beta-D-mannosaminyl-(1-&gt;4)-N-acetyl-alpha-D-glucosaminyl di-trans,octa-cis-undecaprenyl diphosphate + n CDP-glycerol = 4-O-{[(2R)-1-glycerylphospho](n)-(2R)-1-glycerylphospho}-N-acetyl-beta-D-mannosaminyl-(1-&gt;4)-N-acetyl-alpha-D-glucosaminyl undecaprenyl diphosphate + n CMP + n H(+). It participates in cell wall biogenesis; poly(glycerol phosphate) teichoic acid biosynthesis. Functionally, responsible for the polymerization of the main chain of the major teichoic acid by sequential transfer of glycerol phosphate units from CDP-glycerol to the disaccharide linkage unit. Synthesizes polymers of approximately 35 glycerol phosphate units in length. This chain is Teichoic acid poly(glycerol phosphate) polymerase, found in Staphylococcus epidermidis (strain ATCC 35984 / DSM 28319 / BCRC 17069 / CCUG 31568 / BM 3577 / RP62A).